The primary structure comprises 217 residues: UPF0502 protein swp_3027 (217 aa).

It belongs to the UPF0502 family.

In Shewanella piezotolerans (strain WP3 / JCM 13877), this protein is UPF0502 protein swp_3027.